A 208-amino-acid chain; its full sequence is Large ribosomal subunit protein bL25 (208 aa).

It belongs to the bacterial ribosomal protein bL25 family. CTC subfamily. Part of the 50S ribosomal subunit; part of the 5S rRNA/L5/L18/L25 subcomplex. Contacts the 5S rRNA. Binds to the 5S rRNA independently of L5 and L18.

Its function is as follows. This is one of the proteins that binds to the 5S RNA in the ribosome where it forms part of the central protuberance. The chain is Large ribosomal subunit protein bL25 from Leptothrix cholodnii (strain ATCC 51168 / LMG 8142 / SP-6) (Leptothrix discophora (strain SP-6)).